Consider the following 303-residue polypeptide: Hydroxyethylthiazole kinase (303 aa).

Over residues 1–15 the composition is skewed to polar residues; the sequence is MTTASTTPNSDTSNL. The tract at residues 1-23 is disordered; that stretch reads MTTASTTPNSDTSNLHEVAPDDP. Methionine 67 serves as a coordination point for substrate. Arginine 142 and serine 206 together coordinate ATP. A substrate-binding site is contributed by glycine 233.

Belongs to the Thz kinase family. Mg(2+) is required as a cofactor.

The catalysed reaction is 5-(2-hydroxyethyl)-4-methylthiazole + ATP = 4-methyl-5-(2-phosphooxyethyl)-thiazole + ADP + H(+). It functions in the pathway cofactor biosynthesis; thiamine diphosphate biosynthesis; 4-methyl-5-(2-phosphoethyl)-thiazole from 5-(2-hydroxyethyl)-4-methylthiazole: step 1/1. In terms of biological role, catalyzes the phosphorylation of the hydroxyl group of 4-methyl-5-beta-hydroxyethylthiazole (THZ). This chain is Hydroxyethylthiazole kinase, found in Bifidobacterium animalis subsp. lactis (strain AD011).